The chain runs to 368 residues: 3-isopropylmalate dehydrogenase (368 aa).

Glycine 79–glutamate 91 contacts NAD(+). Substrate contacts are provided by arginine 98, arginine 108, arginine 137, and aspartate 226. The Mg(2+) site is built by aspartate 226, aspartate 251, and aspartate 255. NAD(+) is bound at residue glycine 291 to asparagine 303.

It belongs to the isocitrate and isopropylmalate dehydrogenases family. In terms of assembly, homodimer. It depends on Mg(2+) as a cofactor. The cofactor is Mn(2+).

The protein localises to the cytoplasm. The enzyme catalyses (2R,3S)-3-isopropylmalate + NAD(+) = 4-methyl-2-oxopentanoate + CO2 + NADH. It participates in amino-acid biosynthesis; L-leucine biosynthesis; L-leucine from 3-methyl-2-oxobutanoate: step 3/4. Its function is as follows. Catalyzes the oxidation of 3-carboxy-2-hydroxy-4-methylpentanoate (3-isopropylmalate) to 3-carboxy-4-methyl-2-oxopentanoate. The product decarboxylates to 4-methyl-2 oxopentanoate. In Sordaria macrospora, this protein is 3-isopropylmalate dehydrogenase (LEU1).